The chain runs to 353 residues: UPF0283 membrane protein YcjF (353 aa).

The segment covering 1 to 19 (MSEPLKPRIDFAEPLKEEP) has biased composition (basic and acidic residues). A disordered region spans residues 1–35 (MSEPLKPRIDFAEPLKEEPTSAFKAQQTFSEAESR). At 1-69 (MSEPLKPRID…LRPKRSLWRK (69 aa)) the chain is on the periplasmic side. A helical transmembrane segment spans residues 70-90 (MVMGGLALFGASVVGQGVQWT). The Cytoplasmic segment spans residues 91-99 (MNAWQTQDW). A helical membrane pass occupies residues 100-120 (VALGGCAAGALIVGAGVGSVV). At 121–212 (TEWRRLWRLR…ARREISRFAA (92 aa)) the chain is on the periplasmic side. A helical membrane pass occupies residues 213 to 233 (ESTLMIAVSPLALVDMAFIAW). The Cytoplasmic segment spans residues 234-353 (RNLRLINRIA…LQKSKSSPEK (120 aa)).

This sequence belongs to the UPF0283 family.

It is found in the cell inner membrane. This chain is UPF0283 membrane protein YcjF (ycjF), found in Salmonella typhimurium (strain LT2 / SGSC1412 / ATCC 700720).